The following is an 83-amino-acid chain: Toxin AahP985 (83 aa).

The N-terminal stretch at 1 to 18 is a signal peptide; it reads MNYLVMISLALLIAGVDS. Residues 20 to 82 form the LCN-type CS-alpha/beta domain; that stretch reads RDAYIAKNDN…VPIKLSGECH (63 aa). 4 disulfides stabilise this stretch: Cys30–Cys81, Cys34–Cys54, Cys40–Cys64, and Cys44–Cys66.

Belongs to the long (4 C-C) scorpion toxin superfamily. Sodium channel inhibitor family. Alpha subfamily. In terms of tissue distribution, expressed by the venom gland.

Its subcellular location is the secreted. In terms of biological role, binds voltage-independently at site-3 of sodium channels (Nav) and inhibits the inactivation of the activated channels, thereby blocking neuronal transmission. This Androctonus australis (Sahara scorpion) protein is Toxin AahP985.